Consider the following 205-residue polypeptide: NADH-ubiquinone oxidoreductase chain 6 (205 aa).

3 consecutive transmembrane segments (helical) span residues 48-68 (FFAM…FLFV), 86-106 (YLPV…FILD), and 150-170 (VWFL…IVLT).

Belongs to the complex I subunit 6 family. In terms of assembly, complex I is composed of about 45 different subunits.

Its subcellular location is the mitochondrion membrane. It carries out the reaction a ubiquinone + NADH + 5 H(+)(in) = a ubiquinol + NAD(+) + 4 H(+)(out). Core subunit of the mitochondrial membrane respiratory chain NADH dehydrogenase (Complex I) that is believed to belong to the minimal assembly required for catalysis. Complex I functions in the transfer of electrons from NADH to the respiratory chain. The immediate electron acceptor for the enzyme is believed to be ubiquinone. This Brassica campestris (Field mustard) protein is NADH-ubiquinone oxidoreductase chain 6 (ND6).